The chain runs to 256 residues: MALPDFSMRQLLEAGVHFGHQTHRWNPKMAPFIYGERNNIHILDLSQTVPLLNSALKVVSDTVARGGRVLYVGTKRQASDIIADAGNRSAQYYVNARWLGGMMTNWKTISNSIQRLRKLDELLAGEAQGFTKKERLNLEREREKLDRALGGIKDMGSVPDLMFIIDTNKEAIAIQEAKRLGIPVVAVIDSNCDPDQIDYPIPGNDDAARAIALYCDLIARAALDGIARQQGAMGIDVGAQVEAPVEPALQAPAEGA.

Belongs to the universal ribosomal protein uS2 family.

The polypeptide is Small ribosomal subunit protein uS2 (Brucella melitensis biotype 1 (strain ATCC 23456 / CCUG 17765 / NCTC 10094 / 16M)).